Here is a 732-residue protein sequence, read N- to C-terminus: Acylamino-acid-releasing enzyme (732 aa).

At Met1 the chain carries N-acetylmethionine. Phosphoserine is present on residues Ser185 and Ser187. Catalysis depends on charge relay system residues Ser587, Asp675, and His707.

Belongs to the peptidase S9C family. Homotetramer.

Its subcellular location is the cytoplasm. It catalyses the reaction Cleavage of an N-acetyl or N-formyl amino acid from the N-terminus of a polypeptide.. Its activity is regulated as follows. Homotetramerization is required for activity. Tetramerization results in the formation of a gated channel which is involved in substrate selection and substrate access to the catalytic sites. This enzyme catalyzes the hydrolysis of the N-terminal peptide bond of an N-acetylated peptide to generate an N-acetylated amino acid and a peptide with a free N-terminus. It preferentially cleaves off Ac-Ala, Ac-Met and Ac-Ser. Also, involved in the degradation of oxidized and glycated proteins. The polypeptide is Acylamino-acid-releasing enzyme (Apeh) (Mus musculus (Mouse)).